A 396-amino-acid polypeptide reads, in one-letter code: MTKTIAINAGSSSLKWQLYLMPEEKVLAKGLIERIGLKDSISTVKFDGRSEQQILDIENHTQAVKILLDDLIRFDIIKAYDEITGVGHRVVAGGEYFKESTVVEGDVLEKVEELSLLAPLHNPANAAGVRAFKELLPDITSVVVFDTSFHTSMPEKAYRYPLPTKYYTENKVRKYGAHGTSHQFVAGEAAKLLGRPLEDLKLITCHIGNGGSITAVKAGKSVDTSMGFTPLGGIMMGTRTGDIDPAIIPYLMQYTEDFNTPEDISRVLNRESGLLGVSANSSDMRDIEAAVAEGNHEASLAYEMYVDRIQKYIGQYLAVLNGADAIVFTAGVGENAENFRRDVISGISWFGCDVDDEKNVFGVTGDISTEAAKIRVLVIPTDEELVIARDVERLKK.

Residue Asn-8 coordinates Mg(2+). An ATP-binding site is contributed by Lys-15. Substrate is bound at residue Arg-89. Catalysis depends on Asp-146, which acts as the Proton donor/acceptor. ATP-binding positions include His-206 to Gly-210, Asp-283 to Arg-285, and Gly-331 to Asn-335. Glu-383 lines the Mg(2+) pocket.

The protein belongs to the acetokinase family. As to quaternary structure, homodimer. Mg(2+) is required as a cofactor. Requires Mn(2+) as cofactor.

It localises to the cytoplasm. The enzyme catalyses acetate + ATP = acetyl phosphate + ADP. Its pathway is metabolic intermediate biosynthesis; acetyl-CoA biosynthesis; acetyl-CoA from acetate: step 1/2. Functionally, catalyzes the formation of acetyl phosphate from acetate and ATP. Can also catalyze the reverse reaction. This Streptococcus pneumoniae (strain 70585) protein is Acetate kinase.